The chain runs to 666 residues: DNA mismatch repair protein MutL (666 aa).

It belongs to the DNA mismatch repair MutL/HexB family.

In terms of biological role, this protein is involved in the repair of mismatches in DNA. It is required for dam-dependent methyl-directed DNA mismatch repair. May act as a 'molecular matchmaker', a protein that promotes the formation of a stable complex between two or more DNA-binding proteins in an ATP-dependent manner without itself being part of a final effector complex. The chain is DNA mismatch repair protein MutL from Clostridium botulinum (strain ATCC 19397 / Type A).